A 288-amino-acid polypeptide reads, in one-letter code: Energy-coupling factor transporter ATP-binding protein EcfA2 (288 aa).

Residues 3–245 enclose the ABC transporter domain; sequence IEFKNVDYIY…PDWLKKHFLD (243 aa). ATP is bound at residue 40 to 47; sequence GHTGSGKS.

Belongs to the ABC transporter superfamily. Energy-coupling factor EcfA family. In terms of assembly, forms a stable energy-coupling factor (ECF) transporter complex composed of 2 membrane-embedded substrate-binding proteins (S component), 2 ATP-binding proteins (A component) and 2 transmembrane proteins (T component).

The protein resides in the cell membrane. In terms of biological role, ATP-binding (A) component of a common energy-coupling factor (ECF) ABC-transporter complex. Unlike classic ABC transporters this ECF transporter provides the energy necessary to transport a number of different substrates. This is Energy-coupling factor transporter ATP-binding protein EcfA2 from Lactobacillus gasseri (strain ATCC 33323 / DSM 20243 / BCRC 14619 / CIP 102991 / JCM 1131 / KCTC 3163 / NCIMB 11718 / NCTC 13722 / AM63).